A 360-amino-acid chain; its full sequence is D-alanine--D-alanine ligase (360 aa).

One can recognise an ATP-grasp domain in the interval 146–352; that stretch reads KLCAVQAGIH…FTELIDRLVR (207 aa). Residue 179–234 coordinates ATP; sequence KKRFAPPFFVKPANLGSSVGIAKIHSFDELENALDEACRLDVKILVEKAIEGREVE. Residues Asp305, Glu319, and Asn321 each contribute to the Mg(2+) site.

Belongs to the D-alanine--D-alanine ligase family. The cofactor is Mg(2+). Requires Mn(2+) as cofactor.

It is found in the cytoplasm. The catalysed reaction is 2 D-alanine + ATP = D-alanyl-D-alanine + ADP + phosphate + H(+). The protein operates within cell wall biogenesis; peptidoglycan biosynthesis. Cell wall formation. The polypeptide is D-alanine--D-alanine ligase (Chlorobium phaeobacteroides (strain BS1)).